We begin with the raw amino-acid sequence, 297 residues long: UDP-N-acetylenolpyruvoylglucosamine reductase (297 aa).

The FAD-binding PCMH-type domain maps to 26–191 (QTGGPAEYLA…IAATFALKAG (166 aa)). Arg-170 is a catalytic residue. The active-site Proton donor is Ser-220. Glu-290 is an active-site residue.

This sequence belongs to the MurB family. FAD serves as cofactor.

It is found in the cytoplasm. The enzyme catalyses UDP-N-acetyl-alpha-D-muramate + NADP(+) = UDP-N-acetyl-3-O-(1-carboxyvinyl)-alpha-D-glucosamine + NADPH + H(+). It functions in the pathway cell wall biogenesis; peptidoglycan biosynthesis. In terms of biological role, cell wall formation. The sequence is that of UDP-N-acetylenolpyruvoylglucosamine reductase from Lactobacillus delbrueckii subsp. bulgaricus (strain ATCC 11842 / DSM 20081 / BCRC 10696 / JCM 1002 / NBRC 13953 / NCIMB 11778 / NCTC 12712 / WDCM 00102 / Lb 14).